The chain runs to 202 residues: Imidazoleglycerol-phosphate dehydratase (202 aa).

The protein belongs to the imidazoleglycerol-phosphate dehydratase family.

Its subcellular location is the cytoplasm. It carries out the reaction D-erythro-1-(imidazol-4-yl)glycerol 3-phosphate = 3-(imidazol-4-yl)-2-oxopropyl phosphate + H2O. The protein operates within amino-acid biosynthesis; L-histidine biosynthesis; L-histidine from 5-phospho-alpha-D-ribose 1-diphosphate: step 6/9. In Corynebacterium glutamicum (strain ATCC 13032 / DSM 20300 / JCM 1318 / BCRC 11384 / CCUG 27702 / LMG 3730 / NBRC 12168 / NCIMB 10025 / NRRL B-2784 / 534), this protein is Imidazoleglycerol-phosphate dehydratase.